We begin with the raw amino-acid sequence, 442 residues long: tRNA-2-methylthio-N(6)-dimethylallyladenosine synthase (442 aa).

The MTTase N-terminal domain maps to 2-120; sequence KKVFIRTFGC…LPKMIVDKET (119 aa). The [4Fe-4S] cluster site is built by Cys-11, Cys-49, Cys-83, Cys-157, Cys-161, and Cys-164. In terms of domain architecture, Radical SAM core spans 143 to 375; sequence RVEGGAAFVS…NEVIEAETAR (233 aa). The region spanning 378–441 is the TRAM domain; the sequence is QTMIGTVQRC…TFSLRGKIVE (64 aa).

It belongs to the methylthiotransferase family. MiaB subfamily. As to quaternary structure, monomer. It depends on [4Fe-4S] cluster as a cofactor.

The protein localises to the cytoplasm. The catalysed reaction is N(6)-dimethylallyladenosine(37) in tRNA + (sulfur carrier)-SH + AH2 + 2 S-adenosyl-L-methionine = 2-methylsulfanyl-N(6)-dimethylallyladenosine(37) in tRNA + (sulfur carrier)-H + 5'-deoxyadenosine + L-methionine + A + S-adenosyl-L-homocysteine + 2 H(+). Its function is as follows. Catalyzes the methylthiolation of N6-(dimethylallyl)adenosine (i(6)A), leading to the formation of 2-methylthio-N6-(dimethylallyl)adenosine (ms(2)i(6)A) at position 37 in tRNAs that read codons beginning with uridine. The sequence is that of tRNA-2-methylthio-N(6)-dimethylallyladenosine synthase from Neisseria gonorrhoeae (strain ATCC 700825 / FA 1090).